The sequence spans 209 residues: Protein-L-isoaspartate O-methyltransferase (209 aa).

Residue Ser-60 is part of the active site.

Belongs to the methyltransferase superfamily. L-isoaspartyl/D-aspartyl protein methyltransferase family.

It is found in the cytoplasm. The enzyme catalyses [protein]-L-isoaspartate + S-adenosyl-L-methionine = [protein]-L-isoaspartate alpha-methyl ester + S-adenosyl-L-homocysteine. In terms of biological role, catalyzes the methyl esterification of L-isoaspartyl residues in peptides and proteins that result from spontaneous decomposition of normal L-aspartyl and L-asparaginyl residues. It plays a role in the repair and/or degradation of damaged proteins. The chain is Protein-L-isoaspartate O-methyltransferase from Photobacterium profundum (strain SS9).